A 370-amino-acid polypeptide reads, in one-letter code: tRNA pseudouridine synthase D (370 aa).

Asp-77 acts as the Nucleophile in catalysis. A TRUD domain is found at 152–297 (GVPNYFGEQR…LEQERRPLLL (146 aa)).

The protein belongs to the pseudouridine synthase TruD family.

It catalyses the reaction uridine(13) in tRNA = pseudouridine(13) in tRNA. Its function is as follows. Responsible for synthesis of pseudouridine from uracil-13 in transfer RNAs. This is tRNA pseudouridine synthase D from Shewanella oneidensis (strain ATCC 700550 / JCM 31522 / CIP 106686 / LMG 19005 / NCIMB 14063 / MR-1).